Consider the following 955-residue polypeptide: Leucine--tRNA ligase (955 aa).

The 'HIGH' region motif lies at 51–61 (PYLNGVLHAGH). A 'KMSKS' region motif is present at residues 647 to 651 (KLSKS). ATP is bound at residue Lys-650.

The protein belongs to the class-I aminoacyl-tRNA synthetase family.

It is found in the cytoplasm. The catalysed reaction is tRNA(Leu) + L-leucine + ATP = L-leucyl-tRNA(Leu) + AMP + diphosphate. This chain is Leucine--tRNA ligase, found in Methanococcus maripaludis (strain C7 / ATCC BAA-1331).